We begin with the raw amino-acid sequence, 154 residues long: Cold shock domain-containing protein C2 (154 aa).

2 disordered regions span residues 1-22 (MTSE…SPVW) and 36-62 (ERGG…SATA). Phosphoserine is present on Ser19. In terms of domain architecture, CSD spans 69–136 (VFKGVCKQFS…KFQAVEVVLT (68 aa)).

In terms of tissue distribution, brain-specific. Expression restricted to the pyramidal neurons of the cerebral cortex and in the Purkinje cells of the cerebellum.

It localises to the nucleus. The protein resides in the cytoplasm. Its function is as follows. RNA-binding factor which binds specifically to the very 3'-UTR ends of both histone H1 and H3.3 mRNAs, encompassing the polyadenylation signal. Might play a central role in the negative regulation of histone variant synthesis in the developing brain. This is Cold shock domain-containing protein C2 (Csdc2) from Rattus norvegicus (Rat).